Consider the following 117-residue polypeptide: Ubiquitin-like protein pmt3/smt3 (117 aa).

Positions 1–37 (MSESPSANISDADKSAITPTTGDTSQQDVKPSTEHIN) are disordered. Residues 17–30 (ITPTTGDTSQQDVK) are compositionally biased toward polar residues. One can recognise a Ubiquitin-like domain in the interval 35 to 115 (HINLKVVGQD…LEQLGGCTHL (81 aa)). Gly-111 is covalently cross-linked (Glycyl lysine isopeptide (Gly-Lys) (interchain with K-? in acceptor proteins)). A propeptide spanning residues 112–117 (CTHLCL) is cleaved from the precursor.

Belongs to the ubiquitin family. SUMO subfamily. As to quaternary structure, interacts with rfp1.

The protein localises to the nucleus. Required for chromosome segregation where it may be involved in microtubule assembly. Loss of smt3 leads to an increase in telomere length. The sequence is that of Ubiquitin-like protein pmt3/smt3 (pmt3) from Schizosaccharomyces pombe (strain 972 / ATCC 24843) (Fission yeast).